Here is a 444-residue protein sequence, read N- to C-terminus: Putative zinc metalloprotease XF_1047 (444 aa).

Histidine 22 is a binding site for Zn(2+). Glutamate 23 is an active-site residue. Histidine 26 lines the Zn(2+) pocket. The chain crosses the membrane as a helical span at residues 98–120 (IAIVAAGPLANLLLCMLLLWVLF). One can recognise a PDZ domain in the interval 192 to 276 (TLELSKLKQP…DGHPGMIEIR (85 aa)). 2 consecutive transmembrane segments (helical) span residues 371-393 (VGWF…LFPI) and 418-440 (AMAA…AFYN).

Belongs to the peptidase M50B family. The cofactor is Zn(2+).

It is found in the cell inner membrane. The protein is Putative zinc metalloprotease XF_1047 of Xylella fastidiosa (strain 9a5c).